Reading from the N-terminus, the 913-residue chain is Alanine--tRNA ligase (913 aa).

Positions 600, 604, 703, and 707 each coordinate Zn(2+).

It belongs to the class-II aminoacyl-tRNA synthetase family. Zn(2+) serves as cofactor.

Its subcellular location is the cytoplasm. The catalysed reaction is tRNA(Ala) + L-alanine + ATP = L-alanyl-tRNA(Ala) + AMP + diphosphate. Catalyzes the attachment of alanine to tRNA(Ala) in a two-step reaction: alanine is first activated by ATP to form Ala-AMP and then transferred to the acceptor end of tRNA(Ala). Also edits incorrectly charged Ser-tRNA(Ala) and Gly-tRNA(Ala) via its editing domain. The protein is Alanine--tRNA ligase of Methanothrix thermoacetophila (strain DSM 6194 / JCM 14653 / NBRC 101360 / PT) (Methanosaeta thermophila).